Consider the following 151-residue polypeptide: MQVILLEKIAKLGSLGSIVNVKPGYARNYLIPQGKARRVTEKVIAEFEAQRAELEKKQSEILAAASAQAARLDGLLVQISQKAGVDGKLFGSVTSANITEELRKQDFPVEKSMIRMPEGQIKQIGDYTVTVVLHSEVSAHITVSVLGETTI.

The protein belongs to the bacterial ribosomal protein bL9 family.

Binds to the 23S rRNA. The polypeptide is Large ribosomal subunit protein bL9 (Nitrosomonas europaea (strain ATCC 19718 / CIP 103999 / KCTC 2705 / NBRC 14298)).